We begin with the raw amino-acid sequence, 477 residues long: GH30 family xylanase (477 aa).

The first 19 residues, 1–19, serve as a signal peptide directing secretion; that stretch reads MYSLLIALLCAGTAVDAQA. Residues Asn-194, Asn-237, and Asn-331 are each glycosylated (N-linked (GlcNAc...) asparagine).

This sequence belongs to the glycosyl hydrolase 30 family.

It is found in the secreted. Activity is enhanced by 10 mM Co(2+), Cu 2(2+) and Mn(2+) to levels as high as 44%. Partial inhibition of activity from 5 to 15% is observed in the presence of the following compouinds at a centration of 10 mM (from higher inhibition to lower): EDTA &gt; Mg(2+) &gt; urea, Zn(2+) &gt; Fe(3+). Xylanase exhibiting endo- and exo-xylanase activity. Shows the highest activity toward beechwood glucuronoxylan, which consists of a beta-1,4-linked xylose backbone decorated with the methylated form of D-glucuronic acid (MeGlcA) attached directly to the main chain at xylose C2. Also acts against wheat arabinoxylan, a xylan without MeGlcA substituents along the main chain, but the xylanase activity is about two orders of magnitude lower than that achieved in the case of beechwood xylan. Shows no activity against carob galactomannan, konjac glucomannan, or barley beta-glucan. The recombinant xylanase also exhibits an exo-activity by releasing processively disaccharide units from the non-reducing end of linear and decorated xylooligosaccharides (XOS). This Thermothelomyces thermophilus (strain ATCC 42464 / BCRC 31852 / DSM 1799) (Sporotrichum thermophile) protein is GH30 family xylanase.